Reading from the N-terminus, the 100-residue chain is Class II hydrophobin 4 (100 aa).

A signal peptide spans Met1–Ala17. Disulfide bonds link Cys29–Cys79, Cys40–Cys70, Cys41–Cys53, and Cys80–Cys92.

It belongs to the cerato-ulmin hydrophobin family.

Its subcellular location is the secreted. The protein localises to the cell wall. In terms of biological role, aerial growth, conidiation, and dispersal of filamentous fungi in the environment rely upon a capability of their secreting small amphipathic proteins called hydrophobins (HPBs) with low sequence identity. Class I can self-assemble into an outermost layer of rodlet bundles on aerial cell surfaces, conferring cellular hydrophobicity that supports fungal growth, development and dispersal; whereas Class II form highly ordered films at water-air interfaces through intermolecular interactions but contribute nothing to the rodlet structure. Does not seem to be important for the ability to cause seedling disease. The polypeptide is Class II hydrophobin 4 (Gibberella moniliformis (Maize ear and stalk rot fungus)).